Reading from the N-terminus, the 153-residue chain is 6,7-dimethyl-8-ribityllumazine synthase (153 aa).

5-amino-6-(D-ribitylamino)uracil contacts are provided by residues phenylalanine 21, 55-57 (AFE), and 79-81 (TVI). 84 to 85 (AT) contacts (2S)-2-hydroxy-3-oxobutyl phosphate. Catalysis depends on histidine 87, which acts as the Proton donor. A 5-amino-6-(D-ribitylamino)uracil-binding site is contributed by phenylalanine 112. Arginine 126 lines the (2S)-2-hydroxy-3-oxobutyl phosphate pocket.

The protein belongs to the DMRL synthase family. As to quaternary structure, forms an icosahedral capsid composed of 60 subunits, arranged as a dodecamer of pentamers.

The catalysed reaction is (2S)-2-hydroxy-3-oxobutyl phosphate + 5-amino-6-(D-ribitylamino)uracil = 6,7-dimethyl-8-(1-D-ribityl)lumazine + phosphate + 2 H2O + H(+). The protein operates within cofactor biosynthesis; riboflavin biosynthesis; riboflavin from 2-hydroxy-3-oxobutyl phosphate and 5-amino-6-(D-ribitylamino)uracil: step 1/2. Its function is as follows. Catalyzes the formation of 6,7-dimethyl-8-ribityllumazine by condensation of 5-amino-6-(D-ribitylamino)uracil with 3,4-dihydroxy-2-butanone 4-phosphate. This is the penultimate step in the biosynthesis of riboflavin. This Bacillus anthracis (strain A0248) protein is 6,7-dimethyl-8-ribityllumazine synthase.